The sequence spans 322 residues: Porphobilinogen deaminase (322 aa).

Cysteine 254 carries the post-translational modification S-(dipyrrolylmethanemethyl)cysteine.

The protein belongs to the HMBS family. Monomer. The cofactor is dipyrromethane.

The enzyme catalyses 4 porphobilinogen + H2O = hydroxymethylbilane + 4 NH4(+). The protein operates within porphyrin-containing compound metabolism; protoporphyrin-IX biosynthesis; coproporphyrinogen-III from 5-aminolevulinate: step 2/4. Tetrapolymerization of the monopyrrole PBG into the hydroxymethylbilane pre-uroporphyrinogen in several discrete steps. The protein is Porphobilinogen deaminase of Methylococcus capsulatus (strain ATCC 33009 / NCIMB 11132 / Bath).